The sequence spans 62 residues: Large ribosomal subunit protein bL33 (62 aa).

The protein belongs to the bacterial ribosomal protein bL33 family.

In Porphyromonas gingivalis (strain ATCC 33277 / DSM 20709 / CIP 103683 / JCM 12257 / NCTC 11834 / 2561), this protein is Large ribosomal subunit protein bL33.